A 250-amino-acid polypeptide reads, in one-letter code: NADH-quinone oxidoreductase subunit C (250 aa).

Belongs to the complex I 30 kDa subunit family. In terms of assembly, NDH-1 is composed of 14 different subunits. Subunits NuoB, C, D, E, F, and G constitute the peripheral sector of the complex.

It localises to the cell inner membrane. The enzyme catalyses a quinone + NADH + 5 H(+)(in) = a quinol + NAD(+) + 4 H(+)(out). In terms of biological role, NDH-1 shuttles electrons from NADH, via FMN and iron-sulfur (Fe-S) centers, to quinones in the respiratory chain. The immediate electron acceptor for the enzyme in this species is believed to be ubiquinone. Couples the redox reaction to proton translocation (for every two electrons transferred, four hydrogen ions are translocated across the cytoplasmic membrane), and thus conserves the redox energy in a proton gradient. This chain is NADH-quinone oxidoreductase subunit C, found in Xylella fastidiosa (strain 9a5c).